We begin with the raw amino-acid sequence, 137 residues long: uncharacterized protein (137 aa).

This is an uncharacterized protein from Schizosaccharomyces pombe (strain 972 / ATCC 24843) (Fission yeast).